A 373-amino-acid polypeptide reads, in one-letter code: Flagellar P-ring protein (373 aa).

Residues 1–26 (MKLFFRIVTLVAVVAMSLADMAPAWA) form the signal peptide.

It belongs to the FlgI family. In terms of assembly, the basal body constitutes a major portion of the flagellar organelle and consists of four rings (L,P,S, and M) mounted on a central rod.

The protein resides in the periplasm. Its subcellular location is the bacterial flagellum basal body. Functionally, assembles around the rod to form the L-ring and probably protects the motor/basal body from shearing forces during rotation. The polypeptide is Flagellar P-ring protein (Rhizobium etli (strain ATCC 51251 / DSM 11541 / JCM 21823 / NBRC 15573 / CFN 42)).